The sequence spans 1032 residues: GPI ethanolamine phosphate transferase 1 (1032 aa).

The Cytoplasmic segment spans residues 1–6; the sequence is MARLGR. The chain crosses the membrane as a helical span at residues 7-27; sequence FGFLALAVVFHLIYAYSIFDI. The Lumenal portion of the chain corresponds to 28–468; the sequence is YFVSPIVSGM…LQTYDWLFLR (441 aa). N150 and N435 each carry an N-linked (GlcNAc...) asparagine glycan. The helical transmembrane segment at 469-489 threads the bilayer; the sequence is TIITFGYLGWIAYALTTVIDL. The Cytoplasmic segment spans residues 490 to 500; it reads HVLHRTSDSKR. Residues 501 to 521 traverse the membrane as a helical segment; it reads TVGSTIFFTSILAALFSVLLY. The Lumenal segment spans residues 522–523; sequence QK. A helical transmembrane segment spans residues 524–544; sequence SSWQYYVYGAFPIFFWEEVFA. Topologically, residues 545 to 564 are cytoplasmic; it reads RRKALIAGREILLGHVRSFG. The helical transmembrane segment at 565–585 threads the bilayer; sequence GYIASGFQLVAFVAVLEALLM. Over 586–596 the chain is Lumenal; sequence RHQVQSYFHRE. A helical transmembrane segment spans residues 597–617; the sequence is IYTVCFVLGSFWPILYGVDFV. At 618-622 the chain is on the cytoplasmic side; sequence RQNTV. A helical transmembrane segment spans residues 623–643; the sequence is LSATWAVGCSLMSTFTLLPVI. The Lumenal portion of the chain corresponds to 644 to 647; it reads KVEN. A helical transmembrane segment spans residues 648–668; it reads INTITYGALLMFFTGLFYLLF. The Cytoplasmic segment spans residues 669-688; sequence EDTILKHSKSSGHAPGAISS. The helical transmembrane segment at 689 to 709 threads the bilayer; the sequence is LGSRVIMGMQVGMVLLALIVT. The Lumenal segment spans residues 710-722; that stretch reads RSSVSSLQAKQGL. The helical transmembrane segment at 723–743 threads the bilayer; that stretch reads PFGNQVVGWFVLVASLVLPFF. Residues 744–766 are Cytoplasmic-facing; it reads HRLYPNSHYLHRLMVLFLTFSPT. Residues 767–787 traverse the membrane as a helical segment; that stretch reads FIILTISYEGLFYFVFCMTLV. At 788 to 841 the chain is on the lumenal side; it reads TWVRLEHAIYVYTARSSAHYGGNNTVPKKPGLNATAVIDGQEYRYRRLGLADTR. 2 N-linked (GlcNAc...) asparagine glycosylation sites follow: N810 and N820. The chain crosses the membrane as a helical span at residues 842 to 862; the sequence is VALFFFFLLQSAFFSTGNIAS. The Cytoplasmic segment spans residues 863 to 884; it reads VSSFSLESVFRLIPVFSPFSQS. A helical membrane pass occupies residues 885-905; the sequence is ALLILKLLIPFAIISANLGIL. The Lumenal portion of the chain corresponds to 906-914; sequence NRRLEVAPS. Residues 915–935 form a helical membrane-spanning segment; that stretch reads ALFMVVMSISDVMTLNFFYMV. Over 936–951 the chain is Cytoplasmic; sequence RDEGSWLDIGTTISHF. Residues 952 to 972 traverse the membrane as a helical segment; that stretch reads LIASFLCTFVAGLEFLSEVFI. Topologically, residues 973–1032 are lumenal; that stretch reads SGVDFGPTTKAIGASITKTVGGTAGSDVVDSQSGPEDAANSKKAEGLEGSETIRQNGGSV. Positions 994–1032 are disordered; the sequence is GTAGSDVVDSQSGPEDAANSKKAEGLEGSETIRQNGGSV.

Belongs to the PIGG/PIGN/PIGO family. PIGN subfamily.

It is found in the endoplasmic reticulum membrane. It participates in glycolipid biosynthesis; glycosylphosphatidylinositol-anchor biosynthesis. In terms of biological role, ethanolamine phosphate transferase involved in glycosylphosphatidylinositol-anchor biosynthesis. Transfers ethanolamine phosphate to the first alpha-1,4-linked mannose of the glycosylphosphatidylinositol precursor of GPI-anchor. The protein is GPI ethanolamine phosphate transferase 1 (mcd4) of Aspergillus fumigatus (strain ATCC MYA-4609 / CBS 101355 / FGSC A1100 / Af293) (Neosartorya fumigata).